Reading from the N-terminus, the 168-residue chain is Anti-sigma-F factor RsbW (168 aa).

Positions 1–31 (MTDQLEDQTQGGSTVDRSLPGGCMADSDLPT) are disordered. Polar residues predominate over residues 7–16 (DQTQGGSTVD). An ATP-binding site is contributed by 124–128 (PGSFS).

The protein belongs to the anti-sigma-factor family. In terms of assembly, homodimer.

Functionally, a cognate anti-sigma factor for alternative sigma factor SigF. Alternative sigma factors are held in an inactive form by an anti-sigma factor. Binds ATP and GTP, may hydrolyze both. The polypeptide is Anti-sigma-F factor RsbW (rsbW) (Mycobacterium tuberculosis (strain CDC 1551 / Oshkosh)).